Consider the following 194-residue polypeptide: Putative manganese efflux pump MntP (194 aa).

6 consecutive transmembrane segments (helical) span residues 3–23 (PFSI…AAIG), 37–57 (LRAG…GWLL), 69–89 (DHWI…VAGL), 110–132 (LGLA…SLAF), 147–167 (CTFS…NLIG), and 172–192 (MLGG…HLSG).

This sequence belongs to the MntP (TC 9.B.29) family.

The protein resides in the cell inner membrane. Its function is as follows. Probably functions as a manganese efflux pump. The polypeptide is Putative manganese efflux pump MntP (Xanthomonas euvesicatoria pv. vesicatoria (strain 85-10) (Xanthomonas campestris pv. vesicatoria)).